Consider the following 101-residue polypeptide: uncharacterized protein (101 aa).

A helical membrane pass occupies residues 17-37 (VIKILLISGISRIIILILAMF).

It localises to the endoplasmic reticulum membrane. This is an uncharacterized protein from Schizosaccharomyces pombe (strain 972 / ATCC 24843) (Fission yeast).